A 428-amino-acid chain; its full sequence is MAAVTYPSSVPTTLDPGNASSAWPLDTSLGNASAGTSLAGLAVSGILISLVYLVVCVVGLLGNSLVIYVVLRHTSSPSVTSVYILNLALADELFMLGLPFLAAQNALSYWPFGSLMCRLVMAVDGINQFTSIFCLTVMSVDRYLAVVHPTRSARWRTAPVARMVSAAVWVASAVVVLPVVVFSGVPRGMSTCHMQWPEPAAAWRTAFIIYTAALGFFGPLLVICLCYLLIVVKVRSTTRRVRAPSCQWVQAPACQRRRRSERRVTRMVVAVVALFVLCWMPFYLLNIVNVVCPLPEEPAFFGLYFLVVALPYANSCANPILYGFLSYRFKQGFRRILLRPSRRVRSQEPGSGPPEKTEEEEDEEEEERREEEERRMQRGQEMNGRLSQIAQPGPSGQQQRPCTGTAKEQQLLPQEATAGDKASTLSHL.

Residues 1-45 (MAAVTYPSSVPTTLDPGNASSAWPLDTSLGNASAGTSLAGLAVSG) are Extracellular-facing. Residues Asn18 and Asn31 are each glycosylated (N-linked (GlcNAc...) asparagine). Residues 46 to 71 (ILISLVYLVVCVVGLLGNSLVIYVVL) form a helical membrane-spanning segment. Residues 72–81 (RHTSSPSVTS) are Cytoplasmic-facing. Residues 82–103 (VYILNLALADELFMLGLPFLAA) form a helical membrane-spanning segment. Residues 104–118 (QNALSYWPFGSLMCR) lie on the Extracellular side of the membrane. Cysteines 117 and 192 form a disulfide. A helical transmembrane segment spans residues 119–140 (LVMAVDGINQFTSIFCLTVMSV). The Cytoplasmic segment spans residues 141 to 162 (DRYLAVVHPTRSARWRTAPVAR). A helical transmembrane segment spans residues 163–182 (MVSAAVWVASAVVVLPVVVF). At 183 to 206 (SGVPRGMSTCHMQWPEPAAAWRTA) the chain is on the extracellular side. A helical membrane pass occupies residues 207–232 (FIIYTAALGFFGPLLVICLCYLLIVV). The Cytoplasmic segment spans residues 233–266 (KVRSTTRRVRAPSCQWVQAPACQRRRRSERRVTR). A helical membrane pass occupies residues 267–288 (MVVAVVALFVLCWMPFYLLNIV). At 289-302 (NVVCPLPEEPAFFG) the chain is on the extracellular side. A helical transmembrane segment spans residues 303 to 325 (LYFLVVALPYANSCANPILYGFL). At 326–428 (SYRFKQGFRR…GDKASTLSHL (103 aa)) the chain is on the cytoplasmic side. Phosphoserine is present on residues Ser341, Ser346, and Ser351. A disordered region spans residues 343–428 (RVRSQEPGSG…GDKASTLSHL (86 aa)). Position 357 is a phosphothreonine (Thr357). Residues 357 to 370 (TEEEEDEEEEERRE) are compositionally biased toward acidic residues. Residues 385–412 (RLSQIAQPGPSGQQQRPCTGTAKEQQLL) are compositionally biased toward polar residues.

Belongs to the G-protein coupled receptor 1 family. Homodimer and heterodimer with SSTR2. Heterodimerization with SSTR2 inactivates SSTR3 receptor function. In terms of processing, phosphorylated. Phosphorylation increases upon somatostatin binding. In terms of tissue distribution, densely expressed in cerebellum and at moderate levels in the amygdala, cortex, striatum, spleen, liver and pituitary.

The protein localises to the cell membrane. Functionally, receptor for somatostatin-14 and -28. This receptor is coupled via pertussis toxin sensitive G proteins to inhibition of adenylyl cyclase. This is Somatostatin receptor type 3 (Sstr3) from Rattus norvegicus (Rat).